Consider the following 100-residue polypeptide: Urease subunit gamma (100 aa).

Belongs to the urease gamma subunit family. In terms of assembly, heterotrimer of UreA (gamma), UreB (beta) and UreC (alpha) subunits. Three heterotrimers associate to form the active enzyme.

It localises to the cytoplasm. The catalysed reaction is urea + 2 H2O + H(+) = hydrogencarbonate + 2 NH4(+). It functions in the pathway nitrogen metabolism; urea degradation; CO(2) and NH(3) from urea (urease route): step 1/1. The polypeptide is Urease subunit gamma (Vibrio parahaemolyticus).